Consider the following 487-residue polypeptide: ATP synthase subunit beta (487 aa).

Position 164–171 (164–171 (GGAGVGKT)) interacts with ATP.

This sequence belongs to the ATPase alpha/beta chains family. As to quaternary structure, F-type ATPases have 2 components, CF(1) - the catalytic core - and CF(0) - the membrane proton channel. CF(1) has five subunits: alpha(3), beta(3), gamma(1), delta(1), epsilon(1). CF(0) has four main subunits: a(1), b(1), b'(1) and c(9-12).

Its subcellular location is the cellular thylakoid membrane. The catalysed reaction is ATP + H2O + 4 H(+)(in) = ADP + phosphate + 5 H(+)(out). Functionally, produces ATP from ADP in the presence of a proton gradient across the membrane. The catalytic sites are hosted primarily by the beta subunits. This Synechococcus sp. (strain CC9605) protein is ATP synthase subunit beta.